A 101-amino-acid polypeptide reads, in one-letter code: Urease subunit beta (101 aa).

This sequence belongs to the urease beta subunit family. As to quaternary structure, heterotrimer of UreA (gamma), UreB (beta) and UreC (alpha) subunits. Three heterotrimers associate to form the active enzyme.

The protein resides in the cytoplasm. It carries out the reaction urea + 2 H2O + H(+) = hydrogencarbonate + 2 NH4(+). Its pathway is nitrogen metabolism; urea degradation; CO(2) and NH(3) from urea (urease route): step 1/1. The chain is Urease subunit beta from Burkholderia vietnamiensis (strain G4 / LMG 22486) (Burkholderia cepacia (strain R1808)).